Consider the following 251-residue polypeptide: Hydroxyacylglutathione hydrolase (251 aa).

Zn(2+) contacts are provided by H53, H55, D57, H58, H110, D127, and H165.

This sequence belongs to the metallo-beta-lactamase superfamily. Glyoxalase II family. In terms of assembly, monomer. Zn(2+) is required as a cofactor.

The catalysed reaction is an S-(2-hydroxyacyl)glutathione + H2O = a 2-hydroxy carboxylate + glutathione + H(+). Its pathway is secondary metabolite metabolism; methylglyoxal degradation; (R)-lactate from methylglyoxal: step 2/2. Thiolesterase that catalyzes the hydrolysis of S-D-lactoyl-glutathione to form glutathione and D-lactic acid. The sequence is that of Hydroxyacylglutathione hydrolase from Cronobacter sakazakii (strain ATCC BAA-894) (Enterobacter sakazakii).